The primary structure comprises 397 residues: Arginine biosynthesis bifunctional protein ArgJ (397 aa).

Substrate-binding residues include Thr-147, Lys-173, Thr-184, Glu-270, Asn-392, and Thr-397. Thr-184 (nucleophile) is an active-site residue.

This sequence belongs to the ArgJ family. In terms of assembly, heterotetramer of two alpha and two beta chains.

It is found in the cytoplasm. The catalysed reaction is N(2)-acetyl-L-ornithine + L-glutamate = N-acetyl-L-glutamate + L-ornithine. It carries out the reaction L-glutamate + acetyl-CoA = N-acetyl-L-glutamate + CoA + H(+). It functions in the pathway amino-acid biosynthesis; L-arginine biosynthesis; L-ornithine and N-acetyl-L-glutamate from L-glutamate and N(2)-acetyl-L-ornithine (cyclic): step 1/1. Its pathway is amino-acid biosynthesis; L-arginine biosynthesis; N(2)-acetyl-L-ornithine from L-glutamate: step 1/4. In terms of biological role, catalyzes two activities which are involved in the cyclic version of arginine biosynthesis: the synthesis of N-acetylglutamate from glutamate and acetyl-CoA as the acetyl donor, and of ornithine by transacetylation between N(2)-acetylornithine and glutamate. The polypeptide is Arginine biosynthesis bifunctional protein ArgJ (Staphylococcus epidermidis (strain ATCC 35984 / DSM 28319 / BCRC 17069 / CCUG 31568 / BM 3577 / RP62A)).